The primary structure comprises 337 residues: uncharacterized protein (337 aa).

The AFP-like domain occupies 279–337; the sequence is SIVAKRNIKKGEYLSVDNISFKRPGRGIETKYLSIILNRKIKNDKEEDDIIYWDDLLGD.

To B.subtilis SpsE.

This is an uncharacterized protein from Methanocaldococcus jannaschii (strain ATCC 43067 / DSM 2661 / JAL-1 / JCM 10045 / NBRC 100440) (Methanococcus jannaschii).